A 541-amino-acid chain; its full sequence is MNNQKFFLIIAIFLSIFLLWDKWEITHTIDKNNNLISQTKIKNTSTINNSLTNQNLDIPSVTNRNNKLDLPNTDTKNQIPFTTVKTDLLTLEISHKGGTIQNAWLNDYPIEIDSEQKFQLLSDRTGKIFQAQSGLLPQGKMPTHHSIFSSKNIYYQMDGNNLVVPFTWKSENGIIVNKRYHFNKNSYVVGIDYQITNTTNNTLHITSYTQLIRNIPDQDNMIMPTYTGGARFNDQDVYEKIEFEDFDDQPKTSYKGGWMAMIEHYFFVAVIPNLNQIHTYSSKIINDKYLLTVVNPELSIAPGATKTIINSNLYIGPKEQSHIDNVAPGLDKTVDYGILFIIAKPLSELLNWIYSIIHSWGYSIIILTLLIKLAFYKLSEKSYRSMAGMRQLAPRLKKLKETYGDNKQKLGKKTMELYKKEKINPASGCLPILVQIPVFISLYWVLLEMVELRQAPFWYLTDLSAPDPYYILPLIMGISMFIQQKLNPPPPDPIQAKIMMALPFVFTIFFLWFPSGLVLYWMINNILSITQQWVINKRINN.

The next 5 helical transmembrane spans lie at 6 to 26 (FFLIIAIFLSIFLLWDKWEIT), 356 to 376 (IIHSWGYSIIILTLLIKLAFY), 430 to 450 (LPILVQIPVFISLYWVLLEMV), 463 to 483 (LSAPDPYYILPLIMGISMFIQ), and 498 to 518 (IMMALPFVFTIFFLWFPSGLV).

This sequence belongs to the OXA1/ALB3/YidC family. Type 1 subfamily. Interacts with the Sec translocase complex via SecD. Specifically interacts with transmembrane segments of nascent integral membrane proteins during membrane integration.

It is found in the cell inner membrane. Its function is as follows. Required for the insertion and/or proper folding and/or complex formation of integral membrane proteins into the membrane. Involved in integration of membrane proteins that insert both dependently and independently of the Sec translocase complex, as well as at least some lipoproteins. Aids folding of multispanning membrane proteins. This is Membrane protein insertase YidC from Vesicomyosocius okutanii subsp. Calyptogena okutanii (strain HA).